A 433-amino-acid polypeptide reads, in one-letter code: Tol-Pal system protein TolB (433 aa).

A signal peptide spans 1–21; it reads MIKRLRGLLVMLCCVAGMAVA.

This sequence belongs to the TolB family. In terms of assembly, the Tol-Pal system is composed of five core proteins: the inner membrane proteins TolA, TolQ and TolR, the periplasmic protein TolB and the outer membrane protein Pal. They form a network linking the inner and outer membranes and the peptidoglycan layer.

It localises to the periplasm. Part of the Tol-Pal system, which plays a role in outer membrane invagination during cell division and is important for maintaining outer membrane integrity. This is Tol-Pal system protein TolB from Pseudomonas putida (strain ATCC 47054 / DSM 6125 / CFBP 8728 / NCIMB 11950 / KT2440).